We begin with the raw amino-acid sequence, 714 residues long: Fatty acid oxidation complex subunit alpha (714 aa).

An enoyl-CoA hydratase region spans residues 1–190 (MEMASAFTLN…KLGLVDDVVP (190 aa)). The segment at 306 to 714 (APLNSVGILG…FWKTTATDLQ (409 aa)) is 3-hydroxyacyl-CoA dehydrogenase.

It in the N-terminal section; belongs to the enoyl-CoA hydratase/isomerase family. In the central section; belongs to the 3-hydroxyacyl-CoA dehydrogenase family. As to quaternary structure, heterotetramer of two alpha chains (FadJ) and two beta chains (FadI).

Its subcellular location is the cytoplasm. The enzyme catalyses a (3S)-3-hydroxyacyl-CoA = a (2E)-enoyl-CoA + H2O. The catalysed reaction is a 4-saturated-(3S)-3-hydroxyacyl-CoA = a (3E)-enoyl-CoA + H2O. It catalyses the reaction a (3S)-3-hydroxyacyl-CoA + NAD(+) = a 3-oxoacyl-CoA + NADH + H(+). It carries out the reaction (3S)-3-hydroxybutanoyl-CoA = (3R)-3-hydroxybutanoyl-CoA. The protein operates within lipid metabolism; fatty acid beta-oxidation. Functionally, catalyzes the formation of a hydroxyacyl-CoA by addition of water on enoyl-CoA. Also exhibits 3-hydroxyacyl-CoA epimerase and 3-hydroxyacyl-CoA dehydrogenase activities. The protein is Fatty acid oxidation complex subunit alpha of Escherichia coli O45:K1 (strain S88 / ExPEC).